A 365-amino-acid chain; its full sequence is D-alanine--D-alanine ligase (365 aa).

The region spanning 156–360 (KKLMAAEGLP…YAQLLDNLIE (205 aa)) is the ATP-grasp domain. 183 to 238 (KRELGLPVFVKPARGGSSIGISRVADWSEWDAALSLAREHDSKVIVEAEIVGVEVE) contributes to the ATP binding site. Residues Asp-315, Glu-327, and Asn-329 each contribute to the Mg(2+) site.

This sequence belongs to the D-alanine--D-alanine ligase family. Requires Mg(2+) as cofactor. The cofactor is Mn(2+).

The protein localises to the cytoplasm. It carries out the reaction 2 D-alanine + ATP = D-alanyl-D-alanine + ADP + phosphate + H(+). It participates in cell wall biogenesis; peptidoglycan biosynthesis. Its function is as follows. Cell wall formation. In Corynebacterium diphtheriae (strain ATCC 700971 / NCTC 13129 / Biotype gravis), this protein is D-alanine--D-alanine ligase.